A 270-amino-acid polypeptide reads, in one-letter code: Proteasome subunit alpha (270 aa).

A disordered region spans residues 229–270 (LLDTEAAGSTPTDAPSDTEDGDSTDGTDRADGTTDSTEETEK). The span at 244-253 (SDTEDGDSTD) shows a compositional bias: acidic residues.

Belongs to the peptidase T1A family. In terms of assembly, the 20S proteasome core is composed of 14 alpha and 14 beta subunits that assemble into four stacked heptameric rings, resulting in a barrel-shaped structure. The two inner rings, each composed of seven catalytic beta subunits, are sandwiched by two outer rings, each composed of seven alpha subunits. The catalytic chamber with the active sites is on the inside of the barrel. Has a gated structure, the ends of the cylinder being occluded by the N-termini of the alpha-subunits. Is capped by the proteasome-associated ATPase, ARC.

It localises to the cytoplasm. It functions in the pathway protein degradation; proteasomal Pup-dependent pathway. Its activity is regulated as follows. The formation of the proteasomal ATPase ARC-20S proteasome complex, likely via the docking of the C-termini of ARC into the intersubunit pockets in the alpha-rings, may trigger opening of the gate for substrate entry. Interconversion between the open-gate and close-gate conformations leads to a dynamic regulation of the 20S proteasome proteolysis activity. Component of the proteasome core, a large protease complex with broad specificity involved in protein degradation. The protein is Proteasome subunit alpha of Streptomyces griseus subsp. griseus (strain JCM 4626 / CBS 651.72 / NBRC 13350 / KCC S-0626 / ISP 5235).